A 194-amino-acid polypeptide reads, in one-letter code: FMN-dependent NADH:quinone oxidoreductase (194 aa).

FMN-binding positions include Ser-9, 15-17 (SIS), and 85-88 (MYNF).

It belongs to the azoreductase type 1 family. In terms of assembly, homodimer. The cofactor is FMN.

It catalyses the reaction 2 a quinone + NADH + H(+) = 2 a 1,4-benzosemiquinone + NAD(+). The enzyme catalyses N,N-dimethyl-1,4-phenylenediamine + anthranilate + 2 NAD(+) = 2-(4-dimethylaminophenyl)diazenylbenzoate + 2 NADH + 2 H(+). Its function is as follows. Quinone reductase that provides resistance to thiol-specific stress caused by electrophilic quinones. Functionally, also exhibits azoreductase activity. Catalyzes the reductive cleavage of the azo bond in aromatic azo compounds to the corresponding amines. This Xanthomonas oryzae pv. oryzae (strain MAFF 311018) protein is FMN-dependent NADH:quinone oxidoreductase.